The sequence spans 344 residues: S-adenosylmethionine:tRNA ribosyltransferase-isomerase (344 aa).

The protein belongs to the QueA family. Monomer.

It localises to the cytoplasm. The enzyme catalyses 7-aminomethyl-7-carbaguanosine(34) in tRNA + S-adenosyl-L-methionine = epoxyqueuosine(34) in tRNA + adenine + L-methionine + 2 H(+). It functions in the pathway tRNA modification; tRNA-queuosine biosynthesis. In terms of biological role, transfers and isomerizes the ribose moiety from AdoMet to the 7-aminomethyl group of 7-deazaguanine (preQ1-tRNA) to give epoxyqueuosine (oQ-tRNA). The chain is S-adenosylmethionine:tRNA ribosyltransferase-isomerase from Heliobacterium modesticaldum (strain ATCC 51547 / Ice1).